The primary structure comprises 264 residues: ATP synthase subunit a (264 aa).

Helical transmembrane passes span 29-49, 90-110, 134-154, 177-197, 208-228, and 235-255; these read TWHI…LWLF, IAPL…MDMI, DLNI…YYSI, IPVN…SLAL, LIFI…ALGV, and LIFH…LTIV.

This sequence belongs to the ATPase A chain family. As to quaternary structure, F-type ATPases have 2 components, CF(1) - the catalytic core - and CF(0) - the membrane proton channel. CF(1) has five subunits: alpha(3), beta(3), gamma(1), delta(1), epsilon(1). CF(0) has three main subunits: a(1), b(2) and c(9-12). The alpha and beta chains form an alternating ring which encloses part of the gamma chain. CF(1) is attached to CF(0) by a central stalk formed by the gamma and epsilon chains, while a peripheral stalk is formed by the delta and b chains.

Its subcellular location is the cell inner membrane. In terms of biological role, key component of the proton channel; it plays a direct role in the translocation of protons across the membrane. This chain is ATP synthase subunit a, found in Shewanella loihica (strain ATCC BAA-1088 / PV-4).